Consider the following 50-residue polypeptide: Small ribosomal subunit protein uS14 (50 aa).

Zn(2+)-binding residues include cysteine 15, cysteine 18, cysteine 33, and cysteine 36.

Belongs to the universal ribosomal protein uS14 family. Zinc-binding uS14 subfamily. In terms of assembly, part of the 30S ribosomal subunit. Zn(2+) is required as a cofactor.

In terms of biological role, binds 16S rRNA, required for the assembly of 30S particles. In Methanosarcina mazei (strain ATCC BAA-159 / DSM 3647 / Goe1 / Go1 / JCM 11833 / OCM 88) (Methanosarcina frisia), this protein is Small ribosomal subunit protein uS14.